The following is a 134-amino-acid chain: Transcription antitermination protein NusB (134 aa).

It belongs to the NusB family.

In terms of biological role, involved in transcription antitermination. Required for transcription of ribosomal RNA (rRNA) genes. Binds specifically to the boxA antiterminator sequence of the ribosomal RNA (rrn) operons. In Shewanella frigidimarina (strain NCIMB 400), this protein is Transcription antitermination protein NusB.